Consider the following 224-residue polypeptide: Envelope glycoprotein L (224 aa).

The N-terminal stretch at 1 to 19 (MGILGWVGLIAVGVLCVRG) is a signal peptide. An interaction with gH region spans residues 20–161 (GLPSTEYVIR…FDYSRTRRCV (142 aa)). A gL alphaherpesvirus-type domain is found at 23-201 (STEYVIRSRV…LTTPPPIIAT (179 aa)). Disulfide bonds link Cys44/Cys76 and Cys149/Cys160. The disordered stretch occupies residues 161 to 224 (VGRQDLGPTN…RRRRPHSRRL (64 aa)). Positions 213 to 224 (KSRRRRPHSRRL) are enriched in basic residues.

The protein belongs to the herpesviridae glycoprotein L (gL) family. Alphaherpesvirinae gL subfamily. Interacts with glycoprotein H (gH); this interaction is necessary for the correct processing and cell surface expression of gH. The heterodimer gH/gL seems to interact with gB trimers during fusion.

The protein resides in the virion membrane. Its subcellular location is the host cell membrane. It localises to the host Golgi apparatus. The protein localises to the host trans-Golgi network. The heterodimer glycoprotein H-glycoprotein L is required for the fusion of viral and plasma membranes leading to virus entry into the host cell. Acts as a functional inhibitor of gH and maintains gH in an inhibited form. Upon binding to host integrins, gL dissociates from gH leading to activation of the viral fusion glycoproteins gB and gH. The chain is Envelope glycoprotein L from Human herpesvirus 1 (strain 17) (HHV-1).